The chain runs to 942 residues: Isoleucine--tRNA ligase (942 aa).

The 'HIGH' region signature appears at 58–68 (PYANGDIHIGH). An L-isoleucyl-5'-AMP-binding site is contributed by glutamate 566. Residues 607–611 (KMSKS) carry the 'KMSKS' region motif. Lysine 610 contacts ATP. 4 residues coordinate Zn(2+): cysteine 905, cysteine 908, cysteine 925, and cysteine 928.

Belongs to the class-I aminoacyl-tRNA synthetase family. IleS type 1 subfamily. In terms of assembly, monomer. Zn(2+) serves as cofactor.

Its subcellular location is the cytoplasm. It carries out the reaction tRNA(Ile) + L-isoleucine + ATP = L-isoleucyl-tRNA(Ile) + AMP + diphosphate. Functionally, catalyzes the attachment of isoleucine to tRNA(Ile). As IleRS can inadvertently accommodate and process structurally similar amino acids such as valine, to avoid such errors it has two additional distinct tRNA(Ile)-dependent editing activities. One activity is designated as 'pretransfer' editing and involves the hydrolysis of activated Val-AMP. The other activity is designated 'posttransfer' editing and involves deacylation of mischarged Val-tRNA(Ile). The chain is Isoleucine--tRNA ligase from Vibrio campbellii (strain ATCC BAA-1116).